Reading from the N-terminus, the 289-residue chain is Splicing factor C9orf78 (289 aa).

Residues methionine 1 to arginine 12 are compositionally biased toward basic residues. The disordered stretch occupies residues methionine 1–valine 27. The interval arginine 5–valine 58 is interaction with SNRNP200. A phosphoserine mark is found at serine 15 and serine 17. Tyrosine 147 is subject to Phosphotyrosine. Positions leucine 232–lysine 283 are enriched in basic and acidic residues. The interval leucine 232–tyrosine 289 is disordered. Threonine 253 bears the Phosphothreonine mark. Phosphoserine is present on serine 261.

Belongs to the TLS1 family. Component of the spliceosome. Interacts with SNRNP200; the interaction is direct. Interacts with PRPF8.

It localises to the nucleus. The protein localises to the chromosome. Its subcellular location is the centromere. Plays a role in pre-mRNA splicing by promoting usage of the upstream 3'-splice site at alternative NAGNAG splice sites; these are sites featuring alternative acceptor motifs separated by only a few nucleotides. May also modulate exon inclusion events. Plays a role in spliceosomal remodeling by displacing WBP4 from SNRNP200 and may act to inhibit SNRNP200 helicase activity. Binds U5 snRNA. Required for proper chromosome segregation. Not required for splicing of shelterin components. The protein is Splicing factor C9orf78 (C9orf78) of Homo sapiens (Human).